The sequence spans 751 residues: Glutathione biosynthesis bifunctional protein GshAB (751 aa).

Residues 1–336 (MELDAVGKAI…QADQLTRQVL (336 aa)) form a glutamate--cysteine ligase region.

It in the N-terminal section; belongs to the glutamate--cysteine ligase type 1 family. Type 2 subfamily. Monomer.

The enzyme catalyses L-cysteine + L-glutamate + ATP = gamma-L-glutamyl-L-cysteine + ADP + phosphate + H(+). The catalysed reaction is gamma-L-glutamyl-L-cysteine + glycine + ATP = glutathione + ADP + phosphate + H(+). Its pathway is sulfur metabolism; glutathione biosynthesis; glutathione from L-cysteine and L-glutamate: step 1/2. It participates in sulfur metabolism; glutathione biosynthesis; glutathione from L-cysteine and L-glutamate: step 2/2. Its function is as follows. Synthesizes glutathione from L-glutamate and L-cysteine via gamma-L-glutamyl-L-cysteine. The polypeptide is Glutathione biosynthesis bifunctional protein GshAB (gshAB) (Lactiplantibacillus plantarum (strain ATCC BAA-793 / NCIMB 8826 / WCFS1) (Lactobacillus plantarum)).